We begin with the raw amino-acid sequence, 524 residues long: Beta-glucosidase 23 (524 aa).

Positions 1-24 (MVLQKLPLIGLLLLLTIVASPANA) are cleaved as a signal peptide. Gln54 is a binding site for a beta-D-glucoside. An N-linked (GlcNAc...) asparagine glycan is attached at Asn60. Residues His157 and 202-203 (NE) each bind a beta-D-glucoside. The Proton donor role is filled by Glu203. Cys222 and Cys230 are disulfide-bonded. The a beta-D-glucoside site is built by Tyr346 and Glu418. The active-site Nucleophile is the Glu418. Asn461 carries an N-linked (GlcNAc...) asparagine glycan. A beta-D-glucoside-binding positions include Trp468, 475-476 (EW), and Phe484. N-linked (GlcNAc...) asparagine glycosylation occurs at Asn494. Residues 521–524 (KDEL) carry the Prevents secretion from ER motif.

Belongs to the glycosyl hydrolase 1 family. In terms of assembly, homodimers. Binds to the deubiquitinating enzyme AMSH3. The inactive form interacts with PBP1/JAL30 to form the PYK10 complex, at least composed of PYK10/BGLU23, BGLU21, BGLU22, JAL22, JAL23, PBP1/JAL30, PBP2/JAL31, JAL32, JAL33, JAL34, JAL35, GLL22 and GLL23. Post-translationally, forms interchain disulfide bonds. Expressed exclusively in roots.

Its subcellular location is the endoplasmic reticulum lumen. It carries out the reaction Hydrolysis of terminal, non-reducing beta-D-glucosyl residues with release of beta-D-glucose.. With respect to regulation, activated by tissue damage and upon binding to PBP1 or PBP2. Functionally, beta-D-glucosidase active on scopolin &gt; esculin &gt;&gt; 4-MU-glucoside &gt;&gt; DIMBOA-glucoside. No activity with pNP-glucoside, oNP-glucoside and sinigrin as substrates. May possess beta-D-fucosidase activity. Required for the beneficial interaction with the endophytic fungus P.indica. May participate in the control of root colonization by P.indica by repressing defense responses and modulating other responses required for a mutualistic interaction. This Arabidopsis thaliana (Mouse-ear cress) protein is Beta-glucosidase 23.